A 478-amino-acid chain; its full sequence is Dihydrolipoyl dehydrogenase (478 aa).

Residues 34–49 (EKYIGKEGKVALGGTC), K58, and G122 contribute to the FAD site. An intrachain disulfide couples C49 to C54. Residues 188-192 (GAGVI), E211, V245, and 276-279 (AVGR) contribute to the NAD(+) site. Residues D319 and A327 each coordinate FAD. H451 (proton acceptor) is an active-site residue.

It belongs to the class-I pyridine nucleotide-disulfide oxidoreductase family. Homodimer. Requires FAD as cofactor.

It is found in the cytoplasm. The catalysed reaction is N(6)-[(R)-dihydrolipoyl]-L-lysyl-[protein] + NAD(+) = N(6)-[(R)-lipoyl]-L-lysyl-[protein] + NADH + H(+). The branched-chain alpha-keto dehydrogenase complex catalyzes the overall conversion of alpha-keto acids to acyl-CoA and CO(2). It contains multiple copies of 3 enzymatic components: branched-chain alpha-keto acid decarboxylase (E1), lipoamide acyltransferase (E2) and lipoamide dehydrogenase (E3). The sequence is that of Dihydrolipoyl dehydrogenase (lpd) from Pseudomonas fluorescens.